Reading from the N-terminus, the 423-residue chain is Adenosylmethionine-8-amino-7-oxononanoate aminotransferase (423 aa).

A substrate-binding site is contributed by W51. Residue G111–S112 coordinates pyridoxal 5'-phosphate. Position 144 (Y144) interacts with substrate. D243 contacts pyridoxal 5'-phosphate. Positions 272 and 306 each coordinate substrate. The residue at position 272 (K272) is an N6-(pyridoxal phosphate)lysine. P307–T308 contacts pyridoxal 5'-phosphate. Residue R390 coordinates substrate.

It belongs to the class-III pyridoxal-phosphate-dependent aminotransferase family. BioA subfamily. In terms of assembly, homodimer. Pyridoxal 5'-phosphate is required as a cofactor.

The protein localises to the cytoplasm. It carries out the reaction (8S)-8-amino-7-oxononanoate + S-adenosyl-L-methionine = S-adenosyl-4-methylsulfanyl-2-oxobutanoate + (7R,8S)-7,8-diammoniononanoate. The protein operates within cofactor biosynthesis; biotin biosynthesis; 7,8-diaminononanoate from 8-amino-7-oxononanoate (SAM route): step 1/1. Catalyzes the transfer of the alpha-amino group from S-adenosyl-L-methionine (SAM) to 7-keto-8-aminopelargonic acid (KAPA) to form 7,8-diaminopelargonic acid (DAPA). It is the only aminotransferase known to utilize SAM as an amino donor. In Corynebacterium glutamicum (strain ATCC 13032 / DSM 20300 / JCM 1318 / BCRC 11384 / CCUG 27702 / LMG 3730 / NBRC 12168 / NCIMB 10025 / NRRL B-2784 / 534), this protein is Adenosylmethionine-8-amino-7-oxononanoate aminotransferase.